Reading from the N-terminus, the 847-residue chain is Rho GTPase-activating protein 12 (847 aa).

Residues 12-74 (PGQAYIEVEY…PAQYVKEVTR (63 aa)) form the SH3 domain. The interval 110 to 241 (LPELSSFGKP…PPNQGRPDSP (132 aa)) is disordered. Composition is skewed to polar residues over residues 117–174 (GKPS…QNRT) and 191–200 (TSFSQEQSCD). Phosphoserine is present on S165. 3 positions are modified to phosphoserine: S201, S213, and S215. The segment covering 224–234 (TEQIRATTPPN) has biased composition (polar residues). A phosphothreonine mark is found at T230 and T231. S240 bears the Phosphoserine mark. Phosphotyrosine is present on Y243. WW domains are found at residues 265-298 (IQINGEWETHKDSSGRCYYYDRGTQERTWKPPRW) and 358-391 (DYTNEKWLKHIDDQGRQYYYSADGSRSEWELPKY). The interval 293–317 (WKPPRWTRDASISKGDFQSPGDQEL) is disordered. Disordered stretches follow at residues 428–466 (DTNDKESPTASKPCFPENESSPSSPKHQDTASSPKDQEK) and 591–625 (PDSPGIEKHDKEKEQKDPKKLRSFKVSSIDSSEQK). Residues 445–461 (NESSPSSPKHQDTASSP) show a composition bias toward polar residues. The PH domain occupies 463–575 (DQEKYGLLNV…WFKVLSSTIN (113 aa)). Phosphoserine is present on S593. Residues 595 to 610 (GIEKHDKEKEQKDPKK) are compositionally biased toward basic and acidic residues. A Rho-GAP domain is found at 657 to 845 (SNLANLCQRE…LILLELSSIF (189 aa)).

Its function is as follows. GTPase activator for the Rho-type GTPases by converting them to an inactive GDP-bound state. This chain is Rho GTPase-activating protein 12 (ARHGAP12), found in Macaca fascicularis (Crab-eating macaque).